The following is a 185-amino-acid chain: Ribosome-recycling factor (185 aa).

Belongs to the RRF family.

It is found in the cytoplasm. In terms of biological role, responsible for the release of ribosomes from messenger RNA at the termination of protein biosynthesis. May increase the efficiency of translation by recycling ribosomes from one round of translation to another. The sequence is that of Ribosome-recycling factor from Aliivibrio salmonicida (strain LFI1238) (Vibrio salmonicida (strain LFI1238)).